The chain runs to 293 residues: 4-diphosphocytidyl-2-C-methyl-D-erythritol kinase (293 aa).

The active site involves lysine 16. 99 to 109 (PMGAGLGGGSS) serves as a coordination point for ATP. Aspartate 141 is a catalytic residue.

The protein belongs to the GHMP kinase family. IspE subfamily.

The catalysed reaction is 4-CDP-2-C-methyl-D-erythritol + ATP = 4-CDP-2-C-methyl-D-erythritol 2-phosphate + ADP + H(+). It functions in the pathway isoprenoid biosynthesis; isopentenyl diphosphate biosynthesis via DXP pathway; isopentenyl diphosphate from 1-deoxy-D-xylulose 5-phosphate: step 3/6. Catalyzes the phosphorylation of the position 2 hydroxy group of 4-diphosphocytidyl-2C-methyl-D-erythritol. This is 4-diphosphocytidyl-2-C-methyl-D-erythritol kinase from Paraburkholderia phytofirmans (strain DSM 17436 / LMG 22146 / PsJN) (Burkholderia phytofirmans).